The primary structure comprises 1462 residues: DNA polymerase III PolC-type (1462 aa).

Residues 424–580 (YVVFDVETTG…YDAEATGRLL (157 aa)) form the Exonuclease domain.

It belongs to the DNA polymerase type-C family. PolC subfamily.

It localises to the cytoplasm. The enzyme catalyses DNA(n) + a 2'-deoxyribonucleoside 5'-triphosphate = DNA(n+1) + diphosphate. Required for replicative DNA synthesis. This DNA polymerase also exhibits 3' to 5' exonuclease activity. The protein is DNA polymerase III PolC-type of Streptococcus sanguinis (strain SK36).